Reading from the N-terminus, the 281-residue chain is Small ribosomal subunit protein uS3 (281 aa).

In terms of domain architecture, KH type-2 spans I38–K106. The interval A218 to S281 is disordered. A compositionally biased stretch (low complexity) spans S238 to R252.

It belongs to the universal ribosomal protein uS3 family. Part of the 30S ribosomal subunit. Forms a tight complex with proteins S10 and S14.

Functionally, binds the lower part of the 30S subunit head. Binds mRNA in the 70S ribosome, positioning it for translation. This chain is Small ribosomal subunit protein uS3, found in Mycobacterium leprae (strain TN).